The primary structure comprises 377 residues: Histone deacetylase 8 (377 aa).

The interval 5 to 336 (RVDVFWHEGM…LHAMLEGVLK (332 aa)) is histone deacetylase. Histidine 145 serves as the catalytic Proton donor/acceptor. Residues aspartate 182, histidine 184, and aspartate 274 each coordinate Zn(2+).

It belongs to the histone deacetylase family. Zn(2+) is required as a cofactor. As to expression, expressed in stems, leaves, flowers, siliques and mature seeds.

It localises to the nucleus. The protein resides in the cytoplasm. It carries out the reaction N(6)-acetyl-L-lysyl-[histone] + H2O = L-lysyl-[histone] + acetate. Responsible for the deacetylation of lysine residues on the N-terminal part of the core histones (H2A, H2B, H3 and H4). Histone deacetylation gives a tag for epigenetic repression and plays an important role in transcriptional regulation, cell cycle progression and developmental events. Histone deacetylases act via the formation of large multiprotein complexes. In Arabidopsis thaliana (Mouse-ear cress), this protein is Histone deacetylase 8.